The chain runs to 629 residues: MIKSLKFSHKILLAAALVVIATFSLFTLYNDSLQRASIREDLEDYLHEMGEITASNVQNWLSGRILLIENLAQTLARDHSPETTQALLEQPLLGSTFLFTYLGQTDGTYTARPTSDLPADYDPRRRPWYNAATSAGQTTLTEPYMEPAIHELVLTIASPARQGGQPFGVVGGDLSLQTVVKIINSLDFGGMGYAFLVSGDGKILVHPDKDQVMKSLSDVYPRNTPKIGSGFSEAELHGNTRILSFSPVKGLSGLDWYIGISVDKDKAYAMLTKLRTSAIVAALIAVVAIVLLLGMLIRVLMQPLTDMGRAMQDIAQGEGDLTKRLKVTSNDEFGALAISFNRFVERIHESIREVAGTARQLHDVAQLVVNASNSSMANSDEQSNRTNSVAAAINELGAAAQEIARNAADASHHASDANHQAEDGKQVVEQTIRAMNELSEKISASCANIEALNSRTVNIGQILEVIKGISEQTNLLALNAAIEAARAGEAGRGFAVVADEVRNLAHRAQESAQQIQKMIEELQIGAQEAVSTMTESQRYSLESVEIANRAGERLSSVTGRIAEIDGMNQSVATATEEQTAVVDSLNMDITEINTLNQEGVENLQATLRACGELETQAGRLRQLVDSFKI.

Residues 1–10 (MIKSLKFSHK) lie on the Cytoplasmic side of the membrane. A helical membrane pass occupies residues 11-31 (ILLAAALVVIATFSLFTLYND). Topologically, residues 32–276 (SLQRASIRED…AYAMLTKLRT (245 aa)) are periplasmic. Positions 37–260 (SIREDLEDYL…LSGLDWYIGI (224 aa)) constitute a Cache domain. L-arginine contacts are provided by residues Tyr109, Ser115, Tyr121, 126–128 (RPW), Glu146, and Asp173. L-glutamine contacts are provided by residues Ser115, Tyr121, 126 to 128 (RPW), 144 to 146 (YME), and Asp173. A helical membrane pass occupies residues 277–297 (SAIVAALIAVVAIVLLLGMLI). The HAMP domain maps to 298–352 (RVLMQPLTDMGRAMQDIAQGEGDLTKRLKVTSNDEFGALAISFNRFVERIHESIR). Residues 298 to 629 (RVLMQPLTDM…LRQLVDSFKI (332 aa)) are Cytoplasmic-facing. Residues 357 to 593 (TARQLHDVAQ…SLNMDITEIN (237 aa)) enclose the Methyl-accepting transducer domain. Positions 405 to 424 (RNAADASHHASDANHQAEDG) are disordered. A compositionally biased stretch (basic and acidic residues) spans 410–424 (ASHHASDANHQAEDG).

The protein belongs to the methyl-accepting chemotaxis (MCP) protein family. In terms of assembly, monomer in the absence and presence of ligands.

The protein localises to the cell inner membrane. Functionally, chemotactic-signal transducers respond to changes in the concentration of attractants and repellents in the environment, transduce a signal from the outside to the inside of the cell, and facilitate sensory adaptation through the variation of the level of methylation. Responds to L-Arg, L-Gln, L-Ala, L-Glu, L-Lys, L-Met and L-Tyr. Also involved in repellent responses to trichloroethylene (TCE), chloroform and methylthiocyanate. This Pseudomonas aeruginosa (strain ATCC 15692 / DSM 22644 / CIP 104116 / JCM 14847 / LMG 12228 / 1C / PRS 101 / PAO1) protein is Methyl-accepting chemotaxis protein PctB (pctB).